Consider the following 55-residue polypeptide: UPF0391 membrane protein Neut_2351/Neut_2360 (55 aa).

A run of 2 helical transmembrane segments spans residues 4-24 and 28-48; these read LAVVFLIIAVIAALLGVTGVA and AEMAWILFVIGIVLAIVFWVL.

This sequence belongs to the UPF0391 family.

Its subcellular location is the cell membrane. The protein is UPF0391 membrane protein Neut_2351/Neut_2360 of Nitrosomonas eutropha (strain DSM 101675 / C91 / Nm57).